Reading from the N-terminus, the 803-residue chain is Protein translocase subunit SecA (803 aa).

ATP contacts are provided by residues Gln-100, 118-122 (GEGKT), and Asp-508.

It belongs to the SecA family. As to quaternary structure, monomer and homodimer. Part of the essential Sec protein translocation apparatus which comprises SecA, SecYEG and auxiliary proteins SecDF. Other proteins may also be involved.

The protein localises to the cell membrane. It is found in the cytoplasm. The enzyme catalyses ATP + H2O + cellular proteinSide 1 = ADP + phosphate + cellular proteinSide 2.. In terms of biological role, part of the Sec protein translocase complex. Interacts with the SecYEG preprotein conducting channel. Has a central role in coupling the hydrolysis of ATP to the transfer of proteins into and across the cell membrane, serving as an ATP-driven molecular motor driving the stepwise translocation of polypeptide chains across the membrane. In Leuconostoc mesenteroides subsp. mesenteroides (strain ATCC 8293 / DSM 20343 / BCRC 11652 / CCM 1803 / JCM 6124 / NCDO 523 / NBRC 100496 / NCIMB 8023 / NCTC 12954 / NRRL B-1118 / 37Y), this protein is Protein translocase subunit SecA.